The following is a 484-amino-acid chain: Adenylosuccinate lyase (484 aa).

N-acetylalanine is present on Ala2. Residues 20–21 (RY), 85–87 (RHD), and 111–112 (TS) each bind substrate. Lys147 is modified (N6-acetyllysine). The active-site Proton donor/acceptor is the His159. A substrate-binding site is contributed by Gln241. Ser289 (proton donor/acceptor) is an active-site residue. Lys295 is modified (N6-acetyllysine). Positions 303, 329, 334, and 338 each coordinate substrate. Lys415 participates in a covalent cross-link: Glycyl lysine isopeptide (Lys-Gly) (interchain with G-Cter in SUMO1).

This sequence belongs to the lyase 1 family. Adenylosuccinate lyase subfamily. Homotetramer. Residues from neighboring subunits contribute catalytic and substrate-binding residues to each active site. Ubiquitously expressed. Both isoforms are produced by all tissues. Isoform 2 is 10-fold less abundant than isoform 1.

The catalysed reaction is N(6)-(1,2-dicarboxyethyl)-AMP = fumarate + AMP. It catalyses the reaction (2S)-2-[5-amino-1-(5-phospho-beta-D-ribosyl)imidazole-4-carboxamido]succinate = 5-amino-1-(5-phospho-beta-D-ribosyl)imidazole-4-carboxamide + fumarate. Its pathway is purine metabolism; AMP biosynthesis via de novo pathway; AMP from IMP: step 2/2. It functions in the pathway purine metabolism; IMP biosynthesis via de novo pathway; 5-amino-1-(5-phospho-D-ribosyl)imidazole-4-carboxamide from 5-amino-1-(5-phospho-D-ribosyl)imidazole-4-carboxylate: step 2/2. Its activity is regulated as follows. The enzyme reaction kinetics indicate cooperativity between subunits. In terms of biological role, catalyzes two non-sequential steps in de novo AMP synthesis: converts (S)-2-(5-amino-1-(5-phospho-D-ribosyl)imidazole-4-carboxamido)succinate (SAICAR) to fumarate plus 5-amino-1-(5-phospho-D-ribosyl)imidazole-4-carboxamide, and thereby also contributes to de novo IMP synthesis, and converts succinyladenosine monophosphate (SAMP) to AMP and fumarate. In Homo sapiens (Human), this protein is Adenylosuccinate lyase (ADSL).